A 681-amino-acid polypeptide reads, in one-letter code: MIKLTIDGQEIEVSEGTTVYQACTKAGKEIPHFCYHERLKIAGNCRMCLVEMEKSPKPIASCAMPVGNGMVIHTDTPMVKKAREGVMEFLLVNHPLDCPICDQGGECDLQDQAFRYGKGTNRFHENKRSIKDKYMGPLIKTAMTRCIQCTRCIRFANDIAGIEEMGAIHRGEHMEVTSYLEQTLDSEISGNMIDICPVGALNSKPYAFKARKWELRHTASIGVHDAEGSNIRIDSRGDEVMRVLPRVNEEINEEWLSDKNRFSYDGLKYQRLDQPYIRKNGKLVSASWDEALKAIADKIKSIKPEKITAFAGTLASVEAMFMLKTFLQKIGCNNYNVNQFDYKLDTTQRGNYLFNTTIAGLEKADLCLLIGANPRQIAPVLNSRIGGRVRAGSLKVARIGEGHNQTYKIQDLGSDLKILEELALDEHKFAEELKAAKYPIIIVGDGVYGRNDGHAILSLIHKIVDKYNIMRDDWKGFNILHNHASMVGGFDIGFDTSLGKLEDIELAYLLGADELPFDKLKSAFIVYQGHHGDIGATKADIILPSAAYTEQSGIYVNLEGRPQIAEKAVSPVGKAKEDIAIIKELADCLKLDTLVSNLQEIRTKLAKEYPIFANIGKIIDNKFAKFSSKDKLSKEPITAETINYYMTDVISKNSVTMARCVEAKQEMSSRGLSTGSRKKRE.

The 2Fe-2S ferredoxin-type domain occupies 1 to 78; it reads MIKLTIDGQE…GMVIHTDTPM (78 aa). [2Fe-2S] cluster contacts are provided by Cys34, Cys45, Cys48, and Cys62. Residues 78–117 form the 4Fe-4S His(Cys)3-ligated-type domain; it reads MVKKAREGVMEFLLVNHPLDCPICDQGGECDLQDQAFRYG. 8 residues coordinate [4Fe-4S] cluster: His94, Cys98, Cys101, Cys107, Cys146, Cys149, Cys152, and Cys196. A 4Fe-4S Mo/W bis-MGD-type domain is found at 215–271; the sequence is LRHTASIGVHDAEGSNIRIDSRGDEVMRVLPRVNEEINEEWLSDKNRFSYDGLKYQR.

Belongs to the complex I 75 kDa subunit family. Requires [2Fe-2S] cluster as cofactor. [4Fe-4S] cluster serves as cofactor.

The catalysed reaction is a quinone + NADH + 5 H(+)(in) = a quinol + NAD(+) + 4 H(+)(out). NDH-1 shuttles electrons from NADH, via FMN and iron-sulfur (Fe-S) centers, to quinones in the respiratory chain. Couples the redox reaction to proton translocation (for every two electrons transferred, four hydrogen ions are translocated across the cytoplasmic membrane), and thus conserves the redox energy in a proton gradient. The polypeptide is NADH-quinone oxidoreductase subunit G (nuoG) (Rickettsia bellii (strain RML369-C)).